A 407-amino-acid chain; its full sequence is tRNA (uracil(54)-C(5))-methyltransferase (407 aa).

The [4Fe-4S] cluster site is built by cysteine 61, cysteine 67, cysteine 70, and cysteine 137. S-adenosyl-L-methionine contacts are provided by residues glutamine 253, tyrosine 279, threonine 284, 300–301, aspartate 327, and aspartate 341; that span reads DS. The active-site Nucleophile is the cysteine 368. Glutamate 400 acts as the Proton acceptor in catalysis.

This sequence belongs to the class I-like SAM-binding methyltransferase superfamily. RNA M5U methyltransferase family.

The catalysed reaction is uridine(54) in tRNA + S-adenosyl-L-methionine = 5-methyluridine(54) in tRNA + S-adenosyl-L-homocysteine + H(+). Catalyzes the formation of 5-methyl-uridine at position 54 (m5U54) in tRNA. The chain is tRNA (uracil(54)-C(5))-methyltransferase from Pyrococcus horikoshii (strain ATCC 700860 / DSM 12428 / JCM 9974 / NBRC 100139 / OT-3).